Consider the following 127-residue polypeptide: Cliotide T3 (127 aa).

An N-terminal signal peptide occupies residues 1–24 (MAYVRLTSLAVLFFLAASVMKTEG). Positions 25-53 (GLPTCGETCTLGTCYVPDCSCSWPICMKN) form a cross-link, cyclopeptide (Gly-Asn). 3 disulfides stabilise this stretch: Cys-29/Cys-43, Cys-33/Cys-45, and Cys-38/Cys-50. The propeptide at 54–127 (HIIAANAKTV…DLKMPLESTN (74 aa)) is removed in mature form.

Contains 3 disulfide bonds. In terms of processing, this is a cyclic peptide. Expressed in flower, stem, shoot, leaf and seed but not in root, pod and nodule (at protein level).

Its function is as follows. Probably participates in a plant defense mechanism. Not active against Gram-negative bacteria E.coli ATCC 700926, K.pneumoniae ATTC 13883 and P.aeruginosa ATCC 39018 at concentration up to 100 uM. Has cytotoxic and hemolytic activity. The sequence is that of Cliotide T3 from Clitoria ternatea (Butterfly pea).